Reading from the N-terminus, the 116-residue chain is Putative iron-sulfur cluster insertion protein ErpA (116 aa).

Iron-sulfur cluster-binding residues include Cys-44, Cys-108, and Cys-110.

Belongs to the HesB/IscA family. In terms of assembly, homodimer. The cofactor is iron-sulfur cluster.

Functionally, required for insertion of 4Fe-4S clusters. This Aromatoleum aromaticum (strain DSM 19018 / LMG 30748 / EbN1) (Azoarcus sp. (strain EbN1)) protein is Putative iron-sulfur cluster insertion protein ErpA.